A 319-amino-acid polypeptide reads, in one-letter code: MRHLLSAADLDRDAAVRVLDVAEEMAATQRREIKKLPTLRGRTVVNLFFEDSTRTRTSFEAAAKRLSADVINFSAKGSSVSKGESLKDTALTLEAMGADAVVVRHGSSGAPHRLAHAGWTRGAVVNAGDGTHEHPTQALLDAYTMRRHLTSGAGDLTGARVVIVGDVLHSRVARSNVLLLRTLGAHVTLVAPPTLLPVGVESWPCATSHDLDAALRDGAPDAVMMLRVQAERMDASKGSFFPSAREYGRRYGLGRQRLALLPEHTIVMHPGPMNRGLEISAEAADSARSTIVEQVGNGVAVRMAVLYLLLAGELPGGDA.

Carbamoyl phosphate is bound by residues arginine 54 and threonine 55. Lysine 82 contributes to the L-aspartate binding site. 3 residues coordinate carbamoyl phosphate: arginine 104, histidine 134, and glutamine 137. Residues arginine 171 and arginine 227 each coordinate L-aspartate. Carbamoyl phosphate is bound by residues glycine 271 and proline 272.

Belongs to the aspartate/ornithine carbamoyltransferase superfamily. ATCase family. As to quaternary structure, heterododecamer (2C3:3R2) of six catalytic PyrB chains organized as two trimers (C3), and six regulatory PyrI chains organized as three dimers (R2).

The enzyme catalyses carbamoyl phosphate + L-aspartate = N-carbamoyl-L-aspartate + phosphate + H(+). Its pathway is pyrimidine metabolism; UMP biosynthesis via de novo pathway; (S)-dihydroorotate from bicarbonate: step 2/3. Catalyzes the condensation of carbamoyl phosphate and aspartate to form carbamoyl aspartate and inorganic phosphate, the committed step in the de novo pyrimidine nucleotide biosynthesis pathway. The sequence is that of Aspartate carbamoyltransferase catalytic subunit from Kineococcus radiotolerans (strain ATCC BAA-149 / DSM 14245 / SRS30216).